We begin with the raw amino-acid sequence, 506 residues long: Exopolyphosphatase (506 aa).

Belongs to the GppA/Ppx family. Homodimer. Mg(2+) is required as a cofactor.

The protein resides in the cell membrane. The enzyme catalyses [phosphate](n) + H2O = [phosphate](n-1) + phosphate + H(+). It carries out the reaction [phosphate](n) + ATP = [phosphate](n+1) + ADP. Its activity is regulated as follows. Exopolyphosphatase activity is stimulated by NH(4)(+) and K(+). Phosphotransferase activity is insensitive to the addition of K(+) or NH(4)(+) ions. In terms of biological role, degradation of inorganic polyphosphates (polyP). Releases orthophosphate processively from the ends of the polyP chain. Also has polyphosphate:ADP phosphotransferase activity, catalyzing the production of ATP from ADP and polyP. This chain is Exopolyphosphatase, found in Pseudomonas aeruginosa (strain ATCC 15692 / DSM 22644 / CIP 104116 / JCM 14847 / LMG 12228 / 1C / PRS 101 / PAO1).